A 240-amino-acid polypeptide reads, in one-letter code: Ribonuclease PH (240 aa).

Residues Arg87 and 125–127 contribute to the phosphate site; that span reads GTR.

This sequence belongs to the RNase PH family. In terms of assembly, homohexameric ring arranged as a trimer of dimers.

The catalysed reaction is tRNA(n+1) + phosphate = tRNA(n) + a ribonucleoside 5'-diphosphate. Its function is as follows. Phosphorolytic 3'-5' exoribonuclease that plays an important role in tRNA 3'-end maturation. Removes nucleotide residues following the 3'-CCA terminus of tRNAs; can also add nucleotides to the ends of RNA molecules by using nucleoside diphosphates as substrates, but this may not be physiologically important. Probably plays a role in initiation of 16S rRNA degradation (leading to ribosome degradation) during starvation. This is Ribonuclease PH from Pseudomonas fluorescens (strain ATCC BAA-477 / NRRL B-23932 / Pf-5).